A 176-amino-acid polypeptide reads, in one-letter code: Peptide deformylase 1 (176 aa).

Fe cation is bound by residues Cys99 and His141. Residue Glu142 is part of the active site. His145 serves as a coordination point for Fe cation.

Belongs to the polypeptide deformylase family. Requires Fe(2+) as cofactor.

It carries out the reaction N-terminal N-formyl-L-methionyl-[peptide] + H2O = N-terminal L-methionyl-[peptide] + formate. Removes the formyl group from the N-terminal Met of newly synthesized proteins. Requires at least a dipeptide for an efficient rate of reaction. N-terminal L-methionine is a prerequisite for activity but the enzyme has broad specificity at other positions. The polypeptide is Peptide deformylase 1 (Nitrosomonas europaea (strain ATCC 19718 / CIP 103999 / KCTC 2705 / NBRC 14298)).